We begin with the raw amino-acid sequence, 564 residues long: Zyxin (564 aa).

Residue Ala2 is modified to N-acetylalanine. Residues 30–141 (VAPKPKVNPF…TQLPPQPREK (112 aa)) are disordered. 2 stretches are compositionally biased toward pro residues: residues 63-78 (IPPP…PPPL) and 93-109 (FPPP…PPAP). A phosphoserine mark is found at Ser117, Ser144, Ser170, and Ser171. The interval 162–344 (NDPFKARVSS…RSPGGPGPLT (183 aa)) is disordered. Pro residues-rich tracts occupy residues 174–189 (VPPP…PSTK) and 197–214 (PLPP…PQPQ). A Phosphothreonine modification is found at Thr180. Residues 234–243 (QPVSSANTQP) are compositionally biased toward polar residues. Arg244 carries the post-translational modification Asymmetric dimethylarginine. A compositionally biased stretch (low complexity) spans 255–275 (PKFAPVAPKFTPVVSKFSPGA). An N6-acetyllysine mark is found at Lys256 and Lys263. Thr265 carries the post-translational modification Phosphothreonine. Lys270 bears the N6-acetyllysine mark. A phosphoserine mark is found at Ser272 and Ser300. Polar residues predominate over residues 294 to 310 (SSVSTGSPQPPSFTYAQ). Residues 311–322 (QKEKPLVQEKQH) show a composition bias toward basic and acidic residues. The residue at position 336 (Ser336) is a Phosphoserine. LIM zinc-binding domains follow at residues 376–435 (CGKC…TLEK), 436–495 (CNTC…YAPR), and 496–562 (CSVC…SARA).

Belongs to the zyxin/ajuba family. Interacts, via the Pro-rich regions, with the EVH1 domains of ENAH, EVL and VASP. Interacts with the first LIM domain of TES. Interacts with SYNPO2.

Its subcellular location is the cytoplasm. The protein localises to the cytoskeleton. The protein resides in the cell junction. It is found in the focal adhesion. It localises to the nucleus. In terms of biological role, adhesion plaque protein. Binds alpha-actinin and the CRP protein. Important for targeting TES and ENA/VASP family members to focal adhesions and for the formation of actin-rich structures. May be a component of a signal transduction pathway that mediates adhesion-stimulated changes in gene expression. The chain is Zyxin (Zyx) from Mus musculus (Mouse).